Here is a 207-residue protein sequence, read N- to C-terminus: Guanylate kinase (207 aa).

Residues 4-184 enclose the Guanylate kinase-like domain; it reads NMYYAISAPS…TLNKIKTIII (181 aa). Residue 11 to 18 coordinates ATP; the sequence is APSGTGKS.

Belongs to the guanylate kinase family.

It localises to the cytoplasm. It catalyses the reaction GMP + ATP = GDP + ADP. Its function is as follows. Essential for recycling GMP and indirectly, cGMP. This is Guanylate kinase from Wigglesworthia glossinidia brevipalpis.